A 273-amino-acid chain; its full sequence is Large ribosomal subunit protein uL2 (273 aa).

Disordered regions lie at residues 28–53 (KPFA…TTRH) and 221–273 (RGTA…RRSK). Over residues 39–48 (KSGGRNNNGR) the composition is skewed to low complexity. Position 242 is an N6-acetyllysine (Lys-242).

The protein belongs to the universal ribosomal protein uL2 family. In terms of assembly, part of the 50S ribosomal subunit. Forms a bridge to the 30S subunit in the 70S ribosome.

Functionally, one of the primary rRNA binding proteins. Required for association of the 30S and 50S subunits to form the 70S ribosome, for tRNA binding and peptide bond formation. It has been suggested to have peptidyltransferase activity; this is somewhat controversial. Makes several contacts with the 16S rRNA in the 70S ribosome. The chain is Large ribosomal subunit protein uL2 from Escherichia coli (strain SE11).